A 301-amino-acid polypeptide reads, in one-letter code: Probable alpha-L-glutamate ligase (301 aa).

In terms of domain architecture, ATP-grasp spans 104–287 (LQLLSRRGIG…VAGIIIEHLE (184 aa)). ATP is bound by residues K141, 178 to 179 (EY), D187, and 211 to 213 (RSN). Residues D248, E260, and N262 each contribute to the Mg(2+) site. 3 residues coordinate Mn(2+): D248, E260, and N262.

It belongs to the RimK family. Requires Mg(2+) as cofactor. Mn(2+) is required as a cofactor.

This chain is Probable alpha-L-glutamate ligase, found in Pseudomonas fluorescens (strain SBW25).